Reading from the N-terminus, the 852-residue chain is Bifunctional uridylyltransferase/uridylyl-removing enzyme (852 aa).

Positions 1–318 (MPENLSSALE…STPVRVTLRI (318 aa)) are uridylyltransferase. Positions 319–672 (DDDYIQVNNQ…SRILPQSDSF (354 aa)) are uridylyl-removing. The HD domain maps to 436–558 (VDDHILAVVR…VQTHERLSAL (123 aa)). ACT domains are found at residues 673–757 (QVMV…SCNR) and 785–852 (SVEI…EQLA).

The protein belongs to the GlnD family. Mg(2+) is required as a cofactor.

The catalysed reaction is [protein-PII]-L-tyrosine + UTP = [protein-PII]-uridylyl-L-tyrosine + diphosphate. The enzyme catalyses [protein-PII]-uridylyl-L-tyrosine + H2O = [protein-PII]-L-tyrosine + UMP + H(+). Uridylyltransferase (UTase) activity is inhibited by glutamine, while glutamine activates uridylyl-removing (UR) activity. Functionally, modifies, by uridylylation and deuridylylation, the PII regulatory proteins (GlnB and homologs), in response to the nitrogen status of the cell that GlnD senses through the glutamine level. Under low glutamine levels, catalyzes the conversion of the PII proteins and UTP to PII-UMP and PPi, while under higher glutamine levels, GlnD hydrolyzes PII-UMP to PII and UMP (deuridylylation). Thus, controls uridylylation state and activity of the PII proteins, and plays an important role in the regulation of nitrogen assimilation and metabolism. The sequence is that of Bifunctional uridylyltransferase/uridylyl-removing enzyme from Neisseria gonorrhoeae (strain ATCC 700825 / FA 1090).